We begin with the raw amino-acid sequence, 83 residues long: Cytochrome c oxidase subunit 7A2, mitochondrial (83 aa).

Residues 1–23 constitute a mitochondrion transit peptide; it reads MLRNLLALRQIAQRTISTTSRRH. The Mitochondrial matrix portion of the chain corresponds to 24–48; sequence FENKVPEKQKLFQEDNGMPVHLKGG. Lys33 is modified (N6-acetyllysine). The helical transmembrane segment at 49–77 threads the bilayer; that stretch reads ASDALLYRATMALTLGGTAYAIYLLAMAA. At 78–83 the chain is on the mitochondrial intermembrane side; it reads FPKKQN.

This sequence belongs to the cytochrome c oxidase VIIa family. As to quaternary structure, component of the cytochrome c oxidase (complex IV, CIV), a multisubunit enzyme composed of 14 subunits. The complex is composed of a catalytic core of 3 subunits MT-CO1, MT-CO2 and MT-CO3, encoded in the mitochondrial DNA, and 11 supernumerary subunits COX4I, COX5A, COX5B, COX6A, COX6B, COX6C, COX7A, COX7B, COX7C, COX8 and NDUFA4, which are encoded in the nuclear genome. The complex exists as a monomer or a dimer and forms supercomplexes (SCs) in the inner mitochondrial membrane with NADH-ubiquinone oxidoreductase (complex I, CI) and ubiquinol-cytochrome c oxidoreductase (cytochrome b-c1 complex, complex III, CIII), resulting in different assemblies (supercomplex SCI(1)III(2)IV(1) and megacomplex MCI(2)III(2)IV(2)). Interacts with PET100.

The protein localises to the mitochondrion inner membrane. The protein operates within energy metabolism; oxidative phosphorylation. Its function is as follows. Component of the cytochrome c oxidase, the last enzyme in the mitochondrial electron transport chain which drives oxidative phosphorylation. The respiratory chain contains 3 multisubunit complexes succinate dehydrogenase (complex II, CII), ubiquinol-cytochrome c oxidoreductase (cytochrome b-c1 complex, complex III, CIII) and cytochrome c oxidase (complex IV, CIV), that cooperate to transfer electrons derived from NADH and succinate to molecular oxygen, creating an electrochemical gradient over the inner membrane that drives transmembrane transport and the ATP synthase. Cytochrome c oxidase is the component of the respiratory chain that catalyzes the reduction of oxygen to water. Electrons originating from reduced cytochrome c in the intermembrane space (IMS) are transferred via the dinuclear copper A center (CU(A)) of subunit 2 and heme A of subunit 1 to the active site in subunit 1, a binuclear center (BNC) formed by heme A3 and copper B (CU(B)). The BNC reduces molecular oxygen to 2 water molecules using 4 electrons from cytochrome c in the IMS and 4 protons from the mitochondrial matrix. This Mus musculus (Mouse) protein is Cytochrome c oxidase subunit 7A2, mitochondrial (Cox7a2).